Reading from the N-terminus, the 330-residue chain is Free fatty acid receptor 2 (330 aa).

The Extracellular portion of the chain corresponds to 1-8; that stretch reads MTPDWHSS. Residues 9 to 29 form a helical membrane-spanning segment; sequence LILTAYILIFLTGLPANLLAL. The Cytoplasmic segment spans residues 30–43; the sequence is RAFMGRVRQPQPAP. The helical transmembrane segment at 44 to 64 threads the bilayer; that stretch reads VHILLLNLTLADLLLLLLLPF. Residues 65–79 are Extracellular-facing; it reads RIVEAASNFRWYLPK. Residues 80 to 100 form a helical membrane-spanning segment; the sequence is IVCALTGFGFYSSIYCSTWLL. Over 101-126 the chain is Cytoplasmic; it reads AGISMERYLGVAFPVQYKLSRRPLYG. The chain crosses the membrane as a helical span at residues 127–147; sequence VIAALVAWIMSFGHCTIVIIV. At 148–184 the chain is on the extracellular side; that stretch reads QYLNSTEQVGTENQITCYENFTQEQLDVVLPVRLELC. 2 N-linked (GlcNAc...) asparagine glycosylation sites follow: N151 and N167. A helical transmembrane segment spans residues 185 to 205; that stretch reads LVLFFVPMAVTIFCYWRFVWI. Topologically, residues 206 to 219 are cytoplasmic; it reads MLTQPHVGAQRRRR. The chain crosses the membrane as a helical span at residues 220–240; it reads AVGLAVVTLLNFLVCFGPYNM. At 241 to 255 the chain is on the extracellular side; sequence SHLVGFYLRQSPSWR. Residues 256–276 form a helical membrane-spanning segment; the sequence is VEAVVFSSLNASLDPLLFYFS. Residues 277–330 lie on the Cytoplasmic side of the membrane; sequence SSVVRRAFGKGLLLIRNPASSMLGRGAKETVEGTKMDRGGSQAEGVQSSEFVTE. A disordered region spans residues 306–330; the sequence is TVEGTKMDRGGSQAEGVQSSEFVTE. Positions 320–330 are enriched in polar residues; the sequence is EGVQSSEFVTE.

This sequence belongs to the G-protein coupled receptor 1 family. Interacts with FCN1 (via Fibrinogen C-terminal domain). In terms of tissue distribution, highly expressed in hematopoietic tissues, such as spleen and bone marrow, with highest levels in a subset of immune cells, including monocytes or neutrophils. Expressed in adipose tissues with high expression in differentiating adipocytes. Expressed by intestinal endocrine cells.

Its subcellular location is the cell membrane. Functionally, g protein-coupled receptor that is activated by a major product of dietary fiber digestion, the short chain fatty acids (SCFAs), and that plays a role in the regulation of whole-body energy homeostasis and in intestinal immunity. In omnivorous mammals, the short chain fatty acids acetate, propionate and butyrate are produced primarily by the gut microbiome that metabolizes dietary fibers. SCFAs serve as a source of energy but also act as signaling molecules. That G protein-coupled receptor is probably coupled to the pertussis toxin-sensitive, G(i/o)-alpha family of G proteins but also to the Gq family. Its activation results in the formation of inositol 1,4,5-trisphosphate, the mobilization of intracellular calcium, the phosphorylation of the MAPK3/ERK1 and MAPK1/ERK2 kinases and the inhibition of intracellular cAMP accumulation. May play a role in glucose homeostasis by regulating the secretion of GLP-1, in response to short-chain fatty acids accumulating in the intestine. May also regulate the production of LEP/Leptin, a hormone acting on the central nervous system to inhibit food intake. Finally, may also regulate whole-body energy homeostasis through adipogenesis regulating both differentiation and lipid storage of adipocytes. In parallel to its role in energy homeostasis, may also mediate the activation of the inflammatory and immune responses by SCFA in the intestine, regulating the rapid production of chemokines and cytokines. May also play a role in the resolution of the inflammatory response and control chemotaxis in neutrophils. In addition to SCFAs, may also be activated by the extracellular lectin FCN1 in a process leading to activation of monocytes and inducing the secretion of interleukin-8/IL-8 in response to the presence of microbes. This is Free fatty acid receptor 2 (Ffar2) from Mus musculus (Mouse).